We begin with the raw amino-acid sequence, 145 residues long: Ribosome-binding factor A (145 aa).

Residues 122 to 132 (KVQRDLESAPR) show a composition bias toward basic and acidic residues. The disordered stretch occupies residues 122–145 (KVQRDLESAPREDDEGEPDSSSRD).

This sequence belongs to the RbfA family. In terms of assembly, monomer. Binds 30S ribosomal subunits, but not 50S ribosomal subunits or 70S ribosomes.

The protein resides in the cytoplasm. One of several proteins that assist in the late maturation steps of the functional core of the 30S ribosomal subunit. Associates with free 30S ribosomal subunits (but not with 30S subunits that are part of 70S ribosomes or polysomes). Required for efficient processing of 16S rRNA. May interact with the 5'-terminal helix region of 16S rRNA. This chain is Ribosome-binding factor A, found in Methylorubrum extorquens (strain PA1) (Methylobacterium extorquens).